The following is a 313-amino-acid chain: MMENYKHTTVLLDEAVNGLNIRPDGIYIDGTFGRGGHSRLILSRLGAEGRLLAIDRDPQAIAVAKTIDDPRFSIVHGPFSQLADYVDERNLTGKIDGILLDLGVSSPQLDDAERGFSFMRDGPLDMRMDPTRGQSAAEWLQTAEEADIAWVIKTFGEERFGKRIARAIVERNRIEPMTRTKELAEVIAAAMPVKDKHKHPATRTFQAVRIWVNSELEEIEQALKSSLSVLAPGGRLSIISFHSLEDRIVKRFMREQSRGPQVPAGIPMTEAQLKKLGGRELRALGKLMPGEEEVAENPRARSSVLRIAERTNA.

Residues 35–37 (GGH), Asp55, Phe79, Asp101, and Gln108 contribute to the S-adenosyl-L-methionine site.

It belongs to the methyltransferase superfamily. RsmH family.

Its subcellular location is the cytoplasm. It catalyses the reaction cytidine(1402) in 16S rRNA + S-adenosyl-L-methionine = N(4)-methylcytidine(1402) in 16S rRNA + S-adenosyl-L-homocysteine + H(+). Functionally, specifically methylates the N4 position of cytidine in position 1402 (C1402) of 16S rRNA. This Klebsiella pneumoniae (strain 342) protein is Ribosomal RNA small subunit methyltransferase H.